Reading from the N-terminus, the 492-residue chain is Transmembrane protein 39B (492 aa).

Residues 1 to 53 (MGGRRGPNRTSYYRNPLCEPGSSGASGGGHSSSASVSSVRSRSRTTSGTGLSS) are disordered. An N-linked (GlcNAc...) asparagine glycan is attached at Asn8. Positions 31–53 (SSSASVSSVRSRSRTTSGTGLSS) are enriched in low complexity. 8 helical membrane-spanning segments follow: residues 77–97 (SILFELQLFFCQLIALFVHYI), 115–135 (TSLNFHLIDFNLLMVTAIVLG), 153–175 (SLFRSILLFLTRFTVLTATGWSL), 185–205 (TYSFLNLLFLCYPFGMYIPFL), 288–308 (EVLVSSMLSAYYVAFVPVWFV), 322–342 (LFLLVSISTSVILMQHLLPAS), 421–441 (ILNILLLLEGAVIVYQLYSLM), and 447–467 (HQTISLALILFSNYYAFFKLL).

It belongs to the TMEM39 family.

It localises to the endoplasmic reticulum membrane. Its function is as follows. May protect the cells against DNA damage caused by exposure to the cold-warming stress and facilitates tissue damage repair during the recovery phase. In Mus musculus (Mouse), this protein is Transmembrane protein 39B.